We begin with the raw amino-acid sequence, 629 residues long: mRNA cleavage and polyadenylation factor CLP1 (629 aa).

ATP-binding residues include Glu21 and Lys72. Residues 142–166 (YIAPRTTDPNTETESDPSGTAAATV) form a disordered region. A compositionally biased stretch (polar residues) spans 148-159 (TDPNTETESDPS). 183 to 188 (SAGKTS) provides a ligand contact to ATP. Residues 562–582 (PPRGGGGAGQPDSSTNPTDDE) form a disordered region.

It belongs to the Clp1 family. Clp1 subfamily. In terms of assembly, component of a pre-mRNA cleavage factor complex. Interacts directly with PCF11.

The protein localises to the nucleus. Functionally, required for endonucleolytic cleavage during polyadenylation-dependent pre-mRNA 3'-end formation. The polypeptide is mRNA cleavage and polyadenylation factor CLP1 (Mycosarcoma maydis (Corn smut fungus)).